The chain runs to 95 residues: Aspartyl/glutamyl-tRNA(Asn/Gln) amidotransferase subunit C (95 aa).

This sequence belongs to the GatC family. As to quaternary structure, heterotrimer of A, B and C subunits.

The catalysed reaction is L-glutamyl-tRNA(Gln) + L-glutamine + ATP + H2O = L-glutaminyl-tRNA(Gln) + L-glutamate + ADP + phosphate + H(+). The enzyme catalyses L-aspartyl-tRNA(Asn) + L-glutamine + ATP + H2O = L-asparaginyl-tRNA(Asn) + L-glutamate + ADP + phosphate + 2 H(+). Allows the formation of correctly charged Asn-tRNA(Asn) or Gln-tRNA(Gln) through the transamidation of misacylated Asp-tRNA(Asn) or Glu-tRNA(Gln) in organisms which lack either or both of asparaginyl-tRNA or glutaminyl-tRNA synthetases. The reaction takes place in the presence of glutamine and ATP through an activated phospho-Asp-tRNA(Asn) or phospho-Glu-tRNA(Gln). The protein is Aspartyl/glutamyl-tRNA(Asn/Gln) amidotransferase subunit C of Alcanivorax borkumensis (strain ATCC 700651 / DSM 11573 / NCIMB 13689 / SK2).